Consider the following 468-residue polypeptide: MPAPTTTLLIEGSFTELADEFAQYIDALRKNEGASLQSEVAPLIEPLRQQEQSEEEPDRKQRDEVLKKLVGAAAVLNAAPEREIISAYNLLVHLVHQASNPDIFLSRICTYLAKPITTSPQFGPTLAISILTTIFNTLAPTDSSRFHVLLAIVAVIRQSGSSYAFEALKPQLAAQLPTWLSAWELDDEDAQKLHLAIADAAQASGDLELAQTHVVQALQTIPANESSSKEARDLAVRALTSALKSPAVFDFTSLTAADAIQALRSSDSTLFELLEIFTADTLDAYEDFIAATPLETISGGVLVDGAEALQTKMRLLTLASLAASTPSRSLPYTTIASALRVPVEDVEKWVIDTIRAGLVEGKLSQLRSEFLVHRATYRVFGEKQWAEVQGRLMVWRRSLESVLGVLRTERERYIRESMQAAAEEVGQGKSGDKGAKGGDRRRNPQQQQQSQPSQPQQAREVELVGGAE.

Residues 40–61 (VAPLIEPLRQQEQSEEEPDRKQ) are disordered. Positions 206–377 (DLELAQTHVV…SEFLVHRATY (172 aa)) constitute a PCI domain. Residues 419 to 468 (QAAAEEVGQGKSGDKGAKGGDRRRNPQQQQQSQPSQPQQAREVELVGGAE) are disordered. Residues 430 to 442 (SGDKGAKGGDRRR) are compositionally biased toward basic and acidic residues. The segment covering 444–457 (PQQQQQSQPSQPQQ) has biased composition (low complexity).

This sequence belongs to the eIF-3 subunit M family. Component of the eukaryotic translation initiation factor 3 (eIF-3) complex.

Its subcellular location is the cytoplasm. In terms of biological role, component of the eukaryotic translation initiation factor 3 (eIF-3) complex, which is involved in protein synthesis of a specialized repertoire of mRNAs and, together with other initiation factors, stimulates binding of mRNA and methionyl-tRNAi to the 40S ribosome. The eIF-3 complex specifically targets and initiates translation of a subset of mRNAs involved in cell proliferation. The protein is Eukaryotic translation initiation factor 3 subunit M of Aspergillus fumigatus (strain CBS 144.89 / FGSC A1163 / CEA10) (Neosartorya fumigata).